We begin with the raw amino-acid sequence, 1134 residues long: Ovochymase-1 (1134 aa).

The signal sequence occupies residues 1–22 (MGLLASAGLLLLLVIGHPRSLG). A propeptide spans 23–46 (LKCGIRMVNMKSKEPAVGSRFFSR) (activation peptide). The Peptidase S1 1 domain occupies 38–296 (AVGSRFFSRI…LMDFITQNLF (259 aa)). N-linked (GlcNAc...) asparagine glycosylation occurs at N52. The cysteines at positions 72 and 88 are disulfide-linked. The active-site Charge relay system is the H87. N99 carries N-linked (GlcNAc...) asparagine glycosylation. Residue E116 participates in Ca(2+) binding. Residue D139 is the Charge relay system of the active site. 3 cysteine pairs are disulfide-bonded: C173/C243, C204/C222, and C233/C262. The active-site Charge relay system is the S237. CUB domains follow at residues 284–410 (VSEL…VTAV) and 419–531 (CGSL…FTIL). N324 carries an N-linked (GlcNAc...) asparagine glycan. Intrachain disulfides connect C341-C373, C419-C446, and C473-C494. N-linked (GlcNAc...) asparagine glycosylation occurs at N431. N507 carries an N-linked (GlcNAc...) asparagine glycan. In terms of domain architecture, Peptidase S1 2 spans 575 to 812 (IAGGEEACPH…FLDWIQSKIN (238 aa)). A disulfide bond links C600 and C616. Residues H615 and D664 each act as charge relay system in the active site. 4 disulfides stabilise this stretch: C698-C769, C729-C747, C759-C788, and C846-C873. S763 serves as the catalytic Charge relay system. The CUB 3 domain maps to 846–957 (CSEAELEKPR…GAFGISYIVL (112 aa)). N1106 is a glycosylation site (N-linked (GlcNAc...) asparagine).

Belongs to the peptidase S1 family.

The protein localises to the secreted. The chain is Ovochymase-1 (OVCH1) from Homo sapiens (Human).